The sequence spans 406 residues: LIM/homeobox protein Lhx2 (406 aa).

2 consecutive LIM zinc-binding domains span residues 53–105 (CAGC…CKED) and 115–168 (CARC…CRLH). Positions 250-270 (DAEHLDRDQPYPSSQKTKRMR) are disordered. Positions 266 to 325 (TKRMRTSFKHHQLRTMKSYFAINHNPDAKDLKQLAQKTGLTKRVLQVWFQNARAKFRRNL) form a DNA-binding region, homeobox. A Nuclear localization signal motif is present at residues 307–323 (KRVLQVWFQNARAKFRR). A compositionally biased stretch (polar residues) spans 328 to 356 (QENTGVDKTSDATLQTGTPSGPASELSNA). Disordered regions lie at residues 328 to 375 (QENT…SPTL) and 387 to 406 (GNLE…TNLF). Positions 357 to 375 (SLSPSSTPTTLTDLTSPTL) are enriched in low complexity. Polar residues predominate over residues 396–406 (SPSQTTLTNLF).

As to quaternary structure, interacts (via LIM domains) with CITED2. Interacts with POU4F2 isoform 1.

The protein resides in the nucleus. Functionally, acts as a transcriptional activator. Stimulates the promoter of the alpha-glycoprotein gene. Transcriptional regulatory protein involved in the control of cell differentiation in developing lymphoid and neural cell types. The polypeptide is LIM/homeobox protein Lhx2 (Lhx2) (Mus musculus (Mouse)).